The primary structure comprises 422 residues: Glutamate-1-semialdehyde 2,1-aminomutase (422 aa).

Lys265 is modified (N6-(pyridoxal phosphate)lysine).

This sequence belongs to the class-III pyridoxal-phosphate-dependent aminotransferase family. HemL subfamily. It depends on pyridoxal 5'-phosphate as a cofactor.

The protein resides in the cytoplasm. The enzyme catalyses (S)-4-amino-5-oxopentanoate = 5-aminolevulinate. It participates in porphyrin-containing compound metabolism; protoporphyrin-IX biosynthesis; 5-aminolevulinate from L-glutamyl-tRNA(Glu): step 2/2. This chain is Glutamate-1-semialdehyde 2,1-aminomutase, found in Methanococcoides burtonii (strain DSM 6242 / NBRC 107633 / OCM 468 / ACE-M).